Consider the following 391-residue polypeptide: ATP phosphoribosyltransferase regulatory subunit (391 aa).

The protein belongs to the class-II aminoacyl-tRNA synthetase family. HisZ subfamily. As to quaternary structure, heteromultimer composed of HisG and HisZ subunits.

It is found in the cytoplasm. Its pathway is amino-acid biosynthesis; L-histidine biosynthesis; L-histidine from 5-phospho-alpha-D-ribose 1-diphosphate: step 1/9. Required for the first step of histidine biosynthesis. May allow the feedback regulation of ATP phosphoribosyltransferase activity by histidine. The chain is ATP phosphoribosyltransferase regulatory subunit from Bacillus licheniformis (strain ATCC 14580 / DSM 13 / JCM 2505 / CCUG 7422 / NBRC 12200 / NCIMB 9375 / NCTC 10341 / NRRL NRS-1264 / Gibson 46).